The sequence spans 483 residues: Cobyric acid synthase (483 aa).

A GATase cobBQ-type domain is found at 248-434 (ALRVVVPVLP…LHGLFEQPSA (187 aa)). Cys-329 functions as the Nucleophile in the catalytic mechanism. His-426 is an active-site residue.

The protein belongs to the CobB/CobQ family. CobQ subfamily.

The protein operates within cofactor biosynthesis; adenosylcobalamin biosynthesis. Functionally, catalyzes amidations at positions B, D, E, and G on adenosylcobyrinic A,C-diamide. NH(2) groups are provided by glutamine, and one molecule of ATP is hydrogenolyzed for each amidation. The chain is Cobyric acid synthase from Ectopseudomonas mendocina (strain ymp) (Pseudomonas mendocina).